Reading from the N-terminus, the 185-residue chain is Ribosome-recycling factor (185 aa).

The protein belongs to the RRF family.

The protein resides in the cytoplasm. Its function is as follows. Responsible for the release of ribosomes from messenger RNA at the termination of protein biosynthesis. May increase the efficiency of translation by recycling ribosomes from one round of translation to another. In Clostridioides difficile (strain 630) (Peptoclostridium difficile), this protein is Ribosome-recycling factor.